The following is a 236-amino-acid chain: RNA-binding protein 24 (236 aa).

The RRM domain occupies threonine 11–leucine 88. The segment at glutamine 175–glutamine 199 is necessary for interaction with EIF4E.

As to quaternary structure, interacts with EIF4E; this interaction prevents EIF4E from binding to p53/TP53 mRNA and inhibits the assembly of translation initiation complex. As to expression, expressed strongly in heart and skeletal muscles. Weakly expressed in intestine, aorta, liver, lung, kidney, uterus and bladder.

The protein localises to the nucleus. The protein resides in the cytoplasm. Multifunctional RNA-binding protein involved in the regulation of pre-mRNA splicing, mRNA stability and mRNA translation important for cell fate decision and differentiation. Plays a major role in pre-mRNA alternative splicing regulation. Mediates preferentially muscle-specific exon inclusion in numerous mRNAs important for striated cardiac and skeletal muscle cell differentiation. Binds to intronic splicing enhancer (ISE) composed of stretches of GU-rich motifs localized in flanking intron of exon that will be included by alternative splicing. Involved in embryonic stem cell (ESC) transition to cardiac cell differentiation by promoting pre-mRNA alternative splicing events of several pluripotency and/or differentiation genes. Plays a role in the regulation of mRNA stability. Binds to 3'-untranslated region (UTR) AU-rich elements in target transcripts, such as CDKN1A and MYOG, leading to maintain their stabilities. Involved in myogenic differentiation by regulating MYOG levels. Binds to multiple regions in the mRNA 3'-UTR of TP63, hence inducing its destabilization. Also promotes the destabilization of the CHRM2 mRNA via its binding to a region in the coding sequence. Plays a role in the regulation of mRNA translation. Mediates repression of p53/TP53 mRNA translation through its binding to U-rich element in the 3'-UTR, hence preventing EIF4E from binding to p53/TP53 mRNA and translation initiation. Binds to a huge amount of mRNAs. Required for embryonic heart development, sarcomer and M-band formation in striated muscles. Together with RBM20, promotes the expression of short isoforms of PDLIM5/ENH in cardiomyocytes. The polypeptide is RNA-binding protein 24 (Mus musculus (Mouse)).